The primary structure comprises 139 residues: Small ribosomal subunit protein uS12 (139 aa).

The interval 1–21 (MPTINQLVRKGRKAVQEKSTA) is disordered. Aspartate 102 carries the 3-methylthioaspartic acid modification.

It belongs to the universal ribosomal protein uS12 family. As to quaternary structure, part of the 30S ribosomal subunit. Contacts proteins S8 and S17. May interact with IF1 in the 30S initiation complex.

In terms of biological role, with S4 and S5 plays an important role in translational accuracy. Interacts with and stabilizes bases of the 16S rRNA that are involved in tRNA selection in the A site and with the mRNA backbone. Located at the interface of the 30S and 50S subunits, it traverses the body of the 30S subunit contacting proteins on the other side and probably holding the rRNA structure together. The combined cluster of proteins S8, S12 and S17 appears to hold together the shoulder and platform of the 30S subunit. The polypeptide is Small ribosomal subunit protein uS12 (Alkaliphilus metalliredigens (strain QYMF)).